Consider the following 159-residue polypeptide: Protein-export protein SecB (159 aa).

It belongs to the SecB family. Homotetramer, a dimer of dimers. One homotetramer interacts with 1 SecA dimer.

It localises to the cytoplasm. In terms of biological role, one of the proteins required for the normal export of preproteins out of the cell cytoplasm. It is a molecular chaperone that binds to a subset of precursor proteins, maintaining them in a translocation-competent state. It also specifically binds to its receptor SecA. The sequence is that of Protein-export protein SecB from Nitrobacter winogradskyi (strain ATCC 25391 / DSM 10237 / CIP 104748 / NCIMB 11846 / Nb-255).